A 914-amino-acid chain; its full sequence is Isoleucine--tRNA ligase (914 aa).

A 'HIGH' region motif is present at residues 64 to 74 (PYANGNFHLGH). Glu557 is an L-isoleucyl-5'-AMP binding site. A 'KMSKS' region motif is present at residues 598 to 602 (PMSKS). Residue Lys601 coordinates ATP. Residues Cys889, Cys892, Cys906, and Cys909 each contribute to the Zn(2+) site.

It belongs to the class-I aminoacyl-tRNA synthetase family. IleS type 1 subfamily. In terms of assembly, monomer. Zn(2+) is required as a cofactor.

The protein localises to the cytoplasm. The catalysed reaction is tRNA(Ile) + L-isoleucine + ATP = L-isoleucyl-tRNA(Ile) + AMP + diphosphate. Its function is as follows. Catalyzes the attachment of isoleucine to tRNA(Ile). As IleRS can inadvertently accommodate and process structurally similar amino acids such as valine, to avoid such errors it has two additional distinct tRNA(Ile)-dependent editing activities. One activity is designated as 'pretransfer' editing and involves the hydrolysis of activated Val-AMP. The other activity is designated 'posttransfer' editing and involves deacylation of mischarged Val-tRNA(Ile). This chain is Isoleucine--tRNA ligase, found in Leptospira interrogans serogroup Icterohaemorrhagiae serovar Lai (strain 56601).